Here is a 508-residue protein sequence, read N- to C-terminus: Hydroxymethylglutaryl-CoA synthase, mitochondrial (508 aa).

Residues 1 to 37 (MQRLLAPARRVLQVKRVMQESSLSPAHLLPAAQQRFS) constitute a mitochondrion transit peptide. Position 52 is an N6-succinyllysine (K52). (3S)-3-hydroxy-3-methylglutaryl-CoA-binding residues include E80 and A81. 2 positions are modified to N6-acetyllysine; alternate: K83 and K118. Residues K83 and K118 each carry the N6-succinyllysine; alternate modification. E132 functions as the Proton donor/acceptor in the catalytic mechanism. Residues C166, N204, and T208 each coordinate (3S)-3-hydroxy-3-methylglutaryl-CoA. The active-site Acyl-thioester intermediate is C166. At K221 the chain carries N6-succinyllysine. K243 is subject to N6-acetyllysine. K256 is modified (N6-acetyllysine; alternate). The residue at position 256 (K256) is an N6-succinyllysine; alternate. 2 residues coordinate (3S)-3-hydroxy-3-methylglutaryl-CoA: S258 and H301. Catalysis depends on H301, which acts as the Proton donor/acceptor. An N6-acetyllysine modification is found at K306. Position 310 (K310) interacts with (3S)-3-hydroxy-3-methylglutaryl-CoA. N6-acetyllysine; alternate is present on residues K310 and K327. 2 positions are modified to N6-succinyllysine; alternate: K310 and K327. The residue at position 333 (K333) is an N6-succinyllysine. N6-acetyllysine; alternate occurs at positions 342, 350, 354, and 358. 4 positions are modified to N6-succinyllysine; alternate: K342, K350, K354, and K358. Positions 380 and 414 each coordinate (3S)-3-hydroxy-3-methylglutaryl-CoA. N6-acetyllysine is present on K427. S433 carries the phosphoserine modification. Position 437 is an N6-acetyllysine (K437). S440 carries the post-translational modification Phosphoserine. K447 is subject to N6-acetyllysine; alternate. An N6-succinyllysine; alternate modification is found at K447. S456 is modified (phosphoserine). K473 bears the N6-acetyllysine; alternate mark. K473 is modified (N6-succinyllysine; alternate). S477 is subject to Phosphoserine.

It belongs to the thiolase-like superfamily. HMG-CoA synthase family. As to quaternary structure, homodimer. Succinylated. Desuccinylated by SIRT5. Succinylation, at least at Lys-83 and Lys-310, inhibits the enzymatic activity. Liver and kidney.

Its subcellular location is the mitochondrion. The enzyme catalyses acetoacetyl-CoA + acetyl-CoA + H2O = (3S)-3-hydroxy-3-methylglutaryl-CoA + CoA + H(+). It participates in metabolic intermediate biosynthesis; (R)-mevalonate biosynthesis; (R)-mevalonate from acetyl-CoA: step 2/3. Functionally, catalyzes the first irreversible step in ketogenesis, condensing acetyl-CoA to acetoacetyl-CoA to form HMG-CoA, which is converted by HMG-CoA reductase (HMGCR) into mevalonate. The sequence is that of Hydroxymethylglutaryl-CoA synthase, mitochondrial (Hmgcs2) from Rattus norvegicus (Rat).